The sequence spans 312 residues: Transcription factor Ouib (312 aa).

Residues 4 to 79 form the ZAD domain; that stretch reads IVCRVCGRQK…IKTQTKWLTI (76 aa). 4 residues coordinate Zn(2+): Cys6, Cys9, Cys52, and Cys55. C2H2-type zinc fingers lie at residues 167–189, 195–217, 223–245, 251–273, and 279–303; these read YICE…MRKH, FGCK…HRVH, FACR…ERTH, YVCE…MVIH, and FRCD…SMMH.

Expressed predominantly in the prothoracic gland during embryonic and larval development.

The protein resides in the nucleus. Its function is as follows. Transcription factor required for ecdysteroid production in the prothoracic gland by activating transcription of the ecdysteroid biosynthesis gene spok. Binds to the 5'-AGCTTTATTATTTAG-3' DNA sequence in the spok enhancer region. This chain is Transcription factor Ouib, found in Drosophila melanogaster (Fruit fly).